Here is an 827-residue protein sequence, read N- to C-terminus: MTRSPLRRLAFGALRRLLYLWVRSETINQSAFTLKLDRSKPVFYVLQQPSVSDLAVVDRECTKAGLPRPVLPVAVGEHIEPAAFFYLTPEPDWFGRQDKRGISPTLDRVVTALGQHAVDDAQIVPVSVFWGQSPDRETSAWKLLFADSWAVTGRLRRLVSILILGRKTRVQFSTPIHLRELVEQDKGQERTLRMVHRILRVHFRNQKAAVIGPDVSHRRNLVKGLVHDPLVRQAIAEEAEREKISLEKAEAQALRYGNEIASDYTYTVIRFLELVLSWFWNKIYDGIKVHNVEGVRDIAQGHEVIYVPCHRSHIDYLLLSYLLFRNGLTPPHIAAGINLNMPVIGGLLRRGGAFFMRRTFKGNPLYTAVFNEYLHTLFSKGFPVEYFVEGGRSRTGRMLRPKTGMLAITLRSFLRSHRLPIVFVPVYIGYERVLEGRTYLGELRGASKKKESIFDLFKVLGALKQRFGQVSVNFGEPIKLAEFLDQQQPGWRQQELGPQYRPAWLNDTTNRLGERVARHLNEAASINPVNLVALALLSTSKLALDDRALARVLDLYLALLRAVPYSPHTTLPDGDGAALIEHVKGMDLLAEQKDALGKILYLDEQNAVLMTYYRNNVLHIFALPALLASFFQSSARISREQILRFTKALYPYLQAELFIRWEIEQLDDVVDQWLAAFVEQGLLKVEGDVYVRPAPSSRQFVLLTLLSRSVAQTLQRFYMAIALLLNAGQNAISAEELEDLCTVMAQRLSILHGLNAPEFFDKSLFRHFIQSLLDQGVLRQDEAGKLSHHPLLSELAEGAAKRVLPAEIRLSIRQVALDRNEDEPAAP.

Positions 309–314 (CHRSHI) match the HXXXXD motif motif.

The protein belongs to the GPAT/DAPAT family.

Its subcellular location is the cell inner membrane. It catalyses the reaction sn-glycerol 3-phosphate + an acyl-CoA = a 1-acyl-sn-glycero-3-phosphate + CoA. It functions in the pathway phospholipid metabolism; CDP-diacylglycerol biosynthesis; CDP-diacylglycerol from sn-glycerol 3-phosphate: step 1/3. The chain is Glycerol-3-phosphate acyltransferase from Ectopseudomonas mendocina (strain ymp) (Pseudomonas mendocina).